The sequence spans 139 residues: 6,7-dimethyl-8-ribityllumazine synthase (139 aa).

Residues Phe-13, 45–47, and 69–71 contribute to the 5-amino-6-(D-ribitylamino)uracil site; these read VFD and AVI. Residue 74 to 75 participates in (2S)-2-hydroxy-3-oxobutyl phosphate binding; the sequence is AT. His-77 functions as the Proton donor in the catalytic mechanism. Leu-102 provides a ligand contact to 5-amino-6-(D-ribitylamino)uracil. (2S)-2-hydroxy-3-oxobutyl phosphate is bound at residue Arg-117.

The protein belongs to the DMRL synthase family.

The enzyme catalyses (2S)-2-hydroxy-3-oxobutyl phosphate + 5-amino-6-(D-ribitylamino)uracil = 6,7-dimethyl-8-(1-D-ribityl)lumazine + phosphate + 2 H2O + H(+). It functions in the pathway cofactor biosynthesis; riboflavin biosynthesis; riboflavin from 2-hydroxy-3-oxobutyl phosphate and 5-amino-6-(D-ribitylamino)uracil: step 1/2. In terms of biological role, catalyzes the formation of 6,7-dimethyl-8-ribityllumazine by condensation of 5-amino-6-(D-ribitylamino)uracil with 3,4-dihydroxy-2-butanone 4-phosphate. This is the penultimate step in the biosynthesis of riboflavin. This chain is 6,7-dimethyl-8-ribityllumazine synthase, found in Methanothermobacter thermautotrophicus (strain ATCC 29096 / DSM 1053 / JCM 10044 / NBRC 100330 / Delta H) (Methanobacterium thermoautotrophicum).